We begin with the raw amino-acid sequence, 1405 residues long: DNA-directed RNA polymerase subunit beta' (1405 aa).

Zn(2+) is bound by residues cysteine 70, cysteine 72, cysteine 85, and cysteine 88. Mg(2+) contacts are provided by aspartate 460, aspartate 462, and aspartate 464. Zn(2+) contacts are provided by cysteine 814, cysteine 888, cysteine 895, and cysteine 898.

Belongs to the RNA polymerase beta' chain family. As to quaternary structure, the RNAP catalytic core consists of 2 alpha, 1 beta, 1 beta' and 1 omega subunit. When a sigma factor is associated with the core the holoenzyme is formed, which can initiate transcription. Mg(2+) serves as cofactor. The cofactor is Zn(2+).

It carries out the reaction RNA(n) + a ribonucleoside 5'-triphosphate = RNA(n+1) + diphosphate. In terms of biological role, DNA-dependent RNA polymerase catalyzes the transcription of DNA into RNA using the four ribonucleoside triphosphates as substrates. The chain is DNA-directed RNA polymerase subunit beta' from Shewanella baltica (strain OS223).